Reading from the N-terminus, the 469-residue chain is Uronate isomerase (469 aa).

This sequence belongs to the metallo-dependent hydrolases superfamily. Uronate isomerase family.

It catalyses the reaction D-glucuronate = D-fructuronate. It carries out the reaction aldehydo-D-galacturonate = keto-D-tagaturonate. It participates in carbohydrate metabolism; pentose and glucuronate interconversion. The polypeptide is Uronate isomerase (Pectobacterium carotovorum subsp. carotovorum (strain PC1)).